Here is a 334-residue protein sequence, read N- to C-terminus: Glycerol-3-phosphate dehydrogenase [NAD(P)+] (334 aa).

NADPH contacts are provided by S14, Y15, H35, and K109. Residues K109, G138, and T140 each contribute to the sn-glycerol 3-phosphate site. NADPH is bound at residue A142. 5 residues coordinate sn-glycerol 3-phosphate: K194, D247, S257, R258, and N259. K194 serves as the catalytic Proton acceptor. An NADPH-binding site is contributed by R258. Positions 282 and 284 each coordinate NADPH.

Belongs to the NAD-dependent glycerol-3-phosphate dehydrogenase family.

Its subcellular location is the cytoplasm. It catalyses the reaction sn-glycerol 3-phosphate + NAD(+) = dihydroxyacetone phosphate + NADH + H(+). The enzyme catalyses sn-glycerol 3-phosphate + NADP(+) = dihydroxyacetone phosphate + NADPH + H(+). It functions in the pathway membrane lipid metabolism; glycerophospholipid metabolism. In terms of biological role, catalyzes the reduction of the glycolytic intermediate dihydroxyacetone phosphate (DHAP) to sn-glycerol 3-phosphate (G3P), the key precursor for phospholipid synthesis. The chain is Glycerol-3-phosphate dehydrogenase [NAD(P)+] from Aeromonas salmonicida (strain A449).